The chain runs to 115 residues: Large ribosomal subunit protein uL24 (115 aa).

This sequence belongs to the universal ribosomal protein uL24 family. As to quaternary structure, part of the 50S ribosomal subunit.

In terms of biological role, one of two assembly initiator proteins, it binds directly to the 5'-end of the 23S rRNA, where it nucleates assembly of the 50S subunit. Functionally, one of the proteins that surrounds the polypeptide exit tunnel on the outside of the subunit. This is Large ribosomal subunit protein uL24 from Beutenbergia cavernae (strain ATCC BAA-8 / DSM 12333 / CCUG 43141 / JCM 11478 / NBRC 16432 / NCIMB 13614 / HKI 0122).